The primary structure comprises 1080 residues: Carbamoyl phosphate synthase large chain (1080 aa).

A carboxyphosphate synthetic domain region spans residues 1-403 (MPKRTDLRTI…SLQKAVRGLE (403 aa)). Residues Arg-129, Arg-169, Gly-175, Gly-176, Glu-208, Val-210, Glu-215, Gly-241, Val-242, His-243, Gln-285, and Glu-299 each coordinate ATP. The region spanning 133 to 328 (RVAMQEIGLE…IAKIAAKLAV (196 aa)) is the ATP-grasp 1 domain. Gln-285, Glu-299, and Asn-301 together coordinate Mg(2+). Positions 285, 299, and 301 each coordinate Mn(2+). The oligomerization domain stretch occupies residues 404–554 (TGKVGLEPTG…YSTYEEECEA (151 aa)). Residues 555 to 942 (APSDRRKIMI…AFARAQEAGD (388 aa)) are carbamoyl phosphate synthetic domain. Residues 679 to 876 (QRLVQQLGLR…LAKIAARCMT (198 aa)) enclose the ATP-grasp 2 domain. ATP-binding residues include Arg-715, Arg-754, Leu-756, Glu-761, Gly-787, Val-788, His-789, Ser-790, Gln-830, and Glu-847. Residues Gln-830, Glu-847, and Asn-849 each contribute to the Mg(2+) site. Residues Gln-830, Glu-847, and Asn-849 each contribute to the Mn(2+) site. Positions 943 to 1080 (IRAPQPGRAF…LQELHKELQV (138 aa)) constitute an MGS-like domain. The segment at 943–1080 (IRAPQPGRAF…LQELHKELQV (138 aa)) is allosteric domain.

This sequence belongs to the CarB family. As to quaternary structure, composed of two chains; the small (or glutamine) chain promotes the hydrolysis of glutamine to ammonia, which is used by the large (or ammonia) chain to synthesize carbamoyl phosphate. Tetramer of heterodimers (alpha,beta)4. It depends on Mg(2+) as a cofactor. Requires Mn(2+) as cofactor.

It carries out the reaction hydrogencarbonate + L-glutamine + 2 ATP + H2O = carbamoyl phosphate + L-glutamate + 2 ADP + phosphate + 2 H(+). The enzyme catalyses hydrogencarbonate + NH4(+) + 2 ATP = carbamoyl phosphate + 2 ADP + phosphate + 2 H(+). It functions in the pathway amino-acid biosynthesis; L-arginine biosynthesis; carbamoyl phosphate from bicarbonate: step 1/1. It participates in pyrimidine metabolism; UMP biosynthesis via de novo pathway; (S)-dihydroorotate from bicarbonate: step 1/3. Large subunit of the glutamine-dependent carbamoyl phosphate synthetase (CPSase). CPSase catalyzes the formation of carbamoyl phosphate from the ammonia moiety of glutamine, carbonate, and phosphate donated by ATP, constituting the first step of 2 biosynthetic pathways, one leading to arginine and/or urea and the other to pyrimidine nucleotides. The large subunit (synthetase) binds the substrates ammonia (free or transferred from glutamine from the small subunit), hydrogencarbonate and ATP and carries out an ATP-coupled ligase reaction, activating hydrogencarbonate by forming carboxy phosphate which reacts with ammonia to form carbamoyl phosphate. The sequence is that of Carbamoyl phosphate synthase large chain from Xylella fastidiosa (strain Temecula1 / ATCC 700964).